A 320-amino-acid chain; its full sequence is ATP synthase gamma chain (320 aa).

Belongs to the ATPase gamma chain family. F-type ATPases have 2 components, CF(1) - the catalytic core - and CF(0) - the membrane proton channel. CF(1) has five subunits: alpha(3), beta(3), gamma(1), delta(1), epsilon(1). CF(0) has three main subunits: a, b and c.

It is found in the cell membrane. Its function is as follows. Produces ATP from ADP in the presence of a proton gradient across the membrane. The gamma chain is believed to be important in regulating ATPase activity and the flow of protons through the CF(0) complex. In Lactobacillus delbrueckii subsp. bulgaricus (strain ATCC 11842 / DSM 20081 / BCRC 10696 / JCM 1002 / NBRC 13953 / NCIMB 11778 / NCTC 12712 / WDCM 00102 / Lb 14), this protein is ATP synthase gamma chain.